An 85-amino-acid chain; its full sequence is Large ribosomal subunit protein bL27 (85 aa).

Residues 1 to 22 form a disordered region; that stretch reads MAHKKAGGSTRNGRDSESKRLG.

This sequence belongs to the bacterial ribosomal protein bL27 family.

The sequence is that of Large ribosomal subunit protein bL27 from Teredinibacter turnerae (strain ATCC 39867 / T7901).